Reading from the N-terminus, the 34-residue chain is Photosystem II reaction center protein Psb30 (34 aa).

A helical membrane pass occupies residues 6-26; that stretch reads IVAQLLSLALVTLSGPAVIFL.

Belongs to the Psb30/Ycf12 family. As to quaternary structure, PSII is composed of 1 copy each of membrane proteins PsbA, PsbB, PsbC, PsbD, PsbE, PsbF, PsbH, PsbI, PsbJ, PsbK, PsbL, PsbM, PsbT, PsbX, PsbY, PsbZ, Psb30/Ycf12, peripheral proteins of the oxygen-evolving complex and a large number of cofactors. It forms dimeric complexes.

The protein localises to the plastid. It is found in the chloroplast thylakoid membrane. Its function is as follows. A core subunit of photosystem II (PSII), probably helps stabilize the reaction center. The chain is Photosystem II reaction center protein Psb30 from Emiliania huxleyi (Coccolithophore).